The following is a 459-amino-acid chain: Trigger factor (459 aa).

A PPIase FKBP-type domain is found at 161–246 (GDKVVIDFQG…IKKIMEGKLP (86 aa)).

This sequence belongs to the FKBP-type PPIase family. Tig subfamily.

Its subcellular location is the cytoplasm. It catalyses the reaction [protein]-peptidylproline (omega=180) = [protein]-peptidylproline (omega=0). Involved in protein export. Acts as a chaperone by maintaining the newly synthesized protein in an open conformation. Functions as a peptidyl-prolyl cis-trans isomerase. In Legionella pneumophila (strain Corby), this protein is Trigger factor.